The chain runs to 502 residues: UPF0371 protein CLK_3516 (502 aa).

It belongs to the UPF0371 family.

The sequence is that of UPF0371 protein CLK_3516 from Clostridium botulinum (strain Loch Maree / Type A3).